A 910-amino-acid polypeptide reads, in one-letter code: Seizure 6-like protein 2 (910 aa).

The first 27 residues, 1 to 27 (MGTPRAQHPPPPQLLFLILLSCPWIQG), serve as a signal peptide directing secretion. Residues 28–844 (LPLKEEEILP…DPSRQLEGGN (817 aa)) lie on the Extracellular side of the membrane. The tract at residues 41 to 48 (SETPTVAS) is O-glycosylated at one site. The disordered stretch occupies residues 65–152 (EMGYLPGSDR…PLGPEGGEEE (88 aa)). Pro residues predominate over residues 123 to 145 (LTPPPGTTAPPPPSPASPGPPLG). Cys173 and Cys202 are oxidised to a cystine. The CUB 1 domain occupies 173 to 286 (CNNNISEGEG…GGFRIHYQAY (114 aa)). 3 N-linked (GlcNAc...) asparagine glycosylation sites follow: Asn176, Asn222, and Asn247. The Sushi 1 domain maps to 288–347 (LSCGFPPRPAHGDVSVTDLHPGGTATFHCDSGYQLQGEETLICLNGTRPSWNGETPSCMA). 6 disulfides stabilise this stretch: Cys290/Cys330, Cys316/Cys345, Cys349/Cys376, Cys464/Cys508, Cys491/Cys523, and Cys527/Cys553. Residues Asn332, Asn355, Asn373, Asn473, and Asn517 are each glycosylated (N-linked (GlcNAc...) asparagine). Positions 349–459 (CGGTIHNATL…LLLSLRFEAF (111 aa)) constitute a CUB 2 domain. Residues 462 to 525 (DRCFAPFLAH…WNDTEPACKA (64 aa)) enclose the Sushi 2 domain. The CUB 3 domain occupies 527–638 (CGGELSEPAG…QGFVLHFKEV (112 aa)). Asn641 carries an N-linked (GlcNAc...) asparagine glycan. 3 consecutive Sushi domains span residues 642 to 701 (DTCP…ACQK), 703 to 766 (MTCA…KCAL), and 769 to 830 (EPCL…LCKV). Disulfide bonds link Cys644–Cys686, Cys672–Cys699, Cys705–Cys747, Cys733–Cys764, Cys771–Cys813, and Cys799–Cys828. Residues 845–865 (LALAILLPLGLVIVLGSGVYI) traverse the membrane as a helical segment. The Cytoplasmic portion of the chain corresponds to 866–910 (YYTKLQGKSLFGFSGSHSYSPITVESDFSNPLYEAGDTREYEVSI).

Belongs to the SEZ6 family. In terms of processing, O-glycosylated with core 1 or possibly core 8 glycans.

The protein resides in the cell membrane. Its subcellular location is the endoplasmic reticulum membrane. May contribute to specialized endoplasmic reticulum functions in neurons. The sequence is that of Seizure 6-like protein 2 (SEZ6L2) from Homo sapiens (Human).